Reading from the N-terminus, the 1180-residue chain is Pyruvate carboxylase 2 (1180 aa).

S2 carries the post-translational modification N-acetylserine. A Biotin carboxylation domain is found at 19-471 (EKNKILVANR…WTTFIDDTPQ (453 aa)). 3 residues coordinate ATP: K137, E221, and H256. The ATP-grasp domain occupies 141–338 (RHLAARANVP…IVSAQIQIAA (198 aa)). Residue R313 is part of the active site. A Pyruvate carboxyltransferase domain is found at 558-825 (TLLMDTTWRD…DTGINVEHVR (268 aa)). Substrate contacts are provided by residues 566–570 (RDAHQ) and R639. D567 contacts a divalent metal cation. The a divalent metal cation site is built by K735, H765, and H767. Residue K735 is modified to N6-carboxylysine. Residue T899 participates in substrate binding. Positions 1095–1170 (KADVHDTHQI…DASDLLVVLE (76 aa)) constitute a Biotinyl-binding domain. Position 1136 is an N6-biotinyllysine (K1136).

As to quaternary structure, homotetramer. Biotin serves as cofactor. The cofactor is Zn(2+).

It localises to the cytoplasm. The catalysed reaction is hydrogencarbonate + pyruvate + ATP = oxaloacetate + ADP + phosphate + H(+). Its pathway is carbohydrate biosynthesis; gluconeogenesis. Pyruvate carboxylase catalyzes a 2-step reaction, involving the ATP-dependent carboxylation of the covalently attached biotin in the first step and the transfer of the carboxyl group to pyruvate in the second. The polypeptide is Pyruvate carboxylase 2 (PYC2) (Saccharomyces cerevisiae (strain ATCC 204508 / S288c) (Baker's yeast)).